The following is a 344-amino-acid chain: Protein PopA1 (344 aa).

Disordered regions lie at residues 1–28 (MSVG…NSQQ), 58–108 (SAGG…DANN), 134–156 (QPGG…AGGQ), 211–242 (GNGV…EDQG), and 268–311 (GGGN…NLQS). 2 stretches are compositionally biased toward low complexity: residues 8-28 (SPSN…NSQQ) and 65-83 (NTGN…ANDP). Residues 89–108 (SKSQGPQSANKTGNVDDANN) show a composition bias toward polar residues. The span at 138–156 (NDKGNGVGGANGAKGAGGQ) shows a compositional bias: gly residues. The segment covering 215–235 (NGNQANGPQNAGDVNGANGAD) has biased composition (low complexity). A compositionally biased stretch (gly residues) spans 268–279 (GGGNQAQGGSKG). The segment covering 280–294 (AGNASPASGANPGAN) has biased composition (low complexity). Residues 295-311 (QPGSADDQSSGQNNLQS) are compositionally biased toward polar residues.

Post-translationally, popA2 and PopA3 are produced from PopA1.

Its subcellular location is the secreted. Functionally, acts as a specific hypersensitive response (HR) elicitor. Has activity on tobacco (non-host plant) and petunia but is without activity on tomato (host plant); PopA3 seems to be more active than a PopA1-PopA2 mixture. This is Protein PopA1 (popA) from Ralstonia nicotianae (strain ATCC BAA-1114 / GMI1000) (Ralstonia solanacearum).